A 129-amino-acid chain; its full sequence is Acyl carrier protein 2, chloroplastic (129 aa).

A chloroplast-targeting transit peptide spans 1–49; it reads MASAAASAVSFARPVKAICVNSVSFSALRKDNVSFRLQPVPQRFSVCCA. The Carrier domain occupies 52–127; that stretch reads KETVEKVCDI…DAANLIDSLV (76 aa). Ser87 bears the O-(pantetheine 4'-phosphoryl)serine mark.

The protein belongs to the acyl carrier protein (ACP) family. In terms of processing, 4'-phosphopantetheine is transferred from CoA to a specific serine of apo-ACP by acpS. This modification is essential for activity because fatty acids are bound in thioester linkage to the sulfhydryl of the prosthetic group.

The protein resides in the plastid. It localises to the chloroplast. It participates in lipid metabolism; fatty acid biosynthesis. Functionally, carrier of the growing fatty acid chain in fatty acid biosynthesis. The chain is Acyl carrier protein 2, chloroplastic (ACL1.2) from Hordeum vulgare (Barley).